A 436-amino-acid chain; its full sequence is Serine--tRNA ligase (436 aa).

239–241 contributes to the L-serine binding site; sequence TAE. An ATP-binding site is contributed by 270 to 272; it reads RKE. Glu-293 is an L-serine binding site. Residue 357–360 participates in ATP binding; it reads EISS. Ser-392 contacts L-serine.

This sequence belongs to the class-II aminoacyl-tRNA synthetase family. Type-1 seryl-tRNA synthetase subfamily. In terms of assembly, homodimer. The tRNA molecule binds across the dimer.

Its subcellular location is the cytoplasm. It catalyses the reaction tRNA(Ser) + L-serine + ATP = L-seryl-tRNA(Ser) + AMP + diphosphate + H(+). The enzyme catalyses tRNA(Sec) + L-serine + ATP = L-seryl-tRNA(Sec) + AMP + diphosphate + H(+). It participates in aminoacyl-tRNA biosynthesis; selenocysteinyl-tRNA(Sec) biosynthesis; L-seryl-tRNA(Sec) from L-serine and tRNA(Sec): step 1/1. In terms of biological role, catalyzes the attachment of serine to tRNA(Ser). Is also able to aminoacylate tRNA(Sec) with serine, to form the misacylated tRNA L-seryl-tRNA(Sec), which will be further converted into selenocysteinyl-tRNA(Sec). This chain is Serine--tRNA ligase, found in Leuconostoc citreum (strain KM20).